The following is a 720-amino-acid chain: Cyclic nucleotide-gated ion channel 17 (720 aa).

Residues 1 to 85 lie on the Cytoplasmic side of the membrane; sequence MELRKDKLLM…SEIVLKWNWV (85 aa). Residues 86–106 traverse the membrane as a helical segment; it reads FIVSCMVALFIDPLYFFVPAI. Residues 107–121 are Extracellular-facing; that stretch reads GGDKNYPCARTDTSL. The helical transmembrane segment at 122–142 threads the bilayer; it reads SILVTFFRTIADLFYLLHIFI. At 143–178 the chain is on the cytoplasmic side; that stretch reads KFRTGFIAPNSSTRVFGRGELVMDPKAIAWRYIKSD. The chain crosses the membrane as a helical span at residues 179–199; it reads FIIDLIATLPLPQIVIWFVIS. Residues 200 to 211 lie on the Extracellular side of the membrane; the sequence is TTKSYRFDHNNN. A helical membrane pass occupies residues 212–232; the sequence is AIALIVLLQYIPRFYLIIPLS. Residues 233–252 are Cytoplasmic-facing; that stretch reads SQIVKATGVVTKTAWAGAAY. A helical transmembrane segment spans residues 253–273; it reads NLLLYMLASHVLGAAWYILSV. Topologically, residues 274-377 are extracellular; that stretch reads DRYTSCWKSR…LSTTMFMGET (104 aa). The chain crosses the membrane as a helical span at residues 378–398; the sequence is TFAVLIAIFGLVLFAHLIGNM. Residues 399–720 lie on the Cytoplasmic side of the membrane; it reads QTYLQSLTVR…EPDFSAEHDD (322 aa). Residues 481-605 and Glu-552 contribute to the a nucleoside 3',5'-cyclic phosphate site; that span reads FFSQ…SKKL. Residues 597–612 form a calmodulin-binding region; the sequence is FRRLHSKKLQHTFRFY. The 30-residue stretch at 617 to 646 folds into the IQ domain; that stretch reads RTWAACFIQAAWRRYKRRVMENNLTAIESM.

It belongs to the cyclic nucleotide-gated cation channel (TC 1.A.1.5) family. Homotetramer or heterotetramer. Part of a functional complex containing PSKR1, BAK1, CNGC17, and AHA. Interacts with AHA1, AHA2, and BAK1, but not with PSKR1 or BRI1.

It is found in the cell membrane. Its function is as follows. Probable cyclic nucleotide-gated ion channel. Forms a functional cation-translocating unit with AHAs that is activated by PSKR1/BAK1 and possibly other BAK1/RLK complexes. Required for PSK-induced protoplast expansion. The chain is Cyclic nucleotide-gated ion channel 17 from Arabidopsis thaliana (Mouse-ear cress).